An 84-amino-acid chain; its full sequence is Defensin-like protein 140 (84 aa).

Residues 1–28 form the signal peptide; that stretch reads MSKSLQLIVTVLCIFTILVLGEICLAKG. 4 disulfides stabilise this stretch: C37–C81, C46–C65, C51–C75, and C55–C77.

This sequence belongs to the DEFL family.

The protein localises to the secreted. The sequence is that of Defensin-like protein 140 (LCR15) from Arabidopsis thaliana (Mouse-ear cress).